The sequence spans 213 residues: MPAHQLDDHNQETRSDDENIVWHPHAITRQDREQQHGHQGVVLWFTGLSGSGKSTLAGALEQALFARGVSTYLLDGDNVRHGLCRDLGFSDADRRENIRRVGEVAKLMVDAGLVVLTAFISPHRAERKMVQDMLASGQFIEVFVDTPLAICEARDPKGLYKKARAGELKNFTGIDSVYESPASPDIHLQGEQLVTNLIEQLLDVLRGRAIIKS.

Positions 1 to 17 (MPAHQLDDHNQETRSDD) are enriched in basic and acidic residues. Residues 1 to 20 (MPAHQLDDHNQETRSDDENI) are disordered. Residue 47–54 (GLSGSGKS) coordinates ATP. Catalysis depends on serine 121, which acts as the Phosphoserine intermediate.

Belongs to the APS kinase family.

The catalysed reaction is adenosine 5'-phosphosulfate + ATP = 3'-phosphoadenylyl sulfate + ADP + H(+). It functions in the pathway sulfur metabolism; hydrogen sulfide biosynthesis; sulfite from sulfate: step 2/3. Its function is as follows. Catalyzes the synthesis of activated sulfate. The protein is Adenylyl-sulfate kinase of Yersinia pestis.